The primary structure comprises 793 residues: DnaJ homolog subfamily C member 10 (793 aa).

Positions 1–32 (MGVWLSKDDYIRDLKRIILCFLIVYMAILVGT) are cleaved as a signal peptide. The 66-residue stretch at 35 to 100 (DFYSLLGVSK…DLRKKYDKYG (66 aa)) folds into the J domain. Positions 130 to 232 (EIITLERREF…ESLVSFAMQH (103 aa)) constitute a Thioredoxin 1 domain. A disulfide bridge connects residues cysteine 158 and cysteine 161. 2 trxb regions span residues 235–350 (STVT…LPDF) and 348–463 (PDFE…PQNF). Thioredoxin domains lie at 454–553 (HVTT…IEDL), 557–662 (SVVS…SLRI), and 671–778 (VSTG…INEK). Cysteine 480 and cysteine 483 are joined by a disulfide. A glycan (N-linked (GlcNAc...) asparagine) is linked at asparagine 530. 2 cysteine pairs are disulfide-bonded: cysteine 588-cysteine 591 and cysteine 700-cysteine 703. The Prevents secretion from ER signature appears at 790 to 793 (KDEL).

Interacts with HSPA5 (via its J domain). Interacts with EDEM1.

Its subcellular location is the endoplasmic reticulum lumen. Endoplasmic reticulum disulfide reductase involved both in the correct folding of proteins and degradation of misfolded proteins. Required for efficient folding of proteins in the endoplasmic reticulum by catalyzing the removal of non-native disulfide bonds formed during the folding of proteins, such as LDLR. Also involved in endoplasmic reticulum-associated degradation (ERAD) by reducing incorrect disulfide bonds in misfolded glycoproteins recognized by EDEM1. Interaction with HSPA5 is required its activity, not for the disulfide reductase activity, but to facilitate the release of DNAJC10 from its substrate. Promotes apoptotic signaling pathway in response to endoplasmic reticulum stress. The polypeptide is DnaJ homolog subfamily C member 10 (DNAJC10) (Pongo abelii (Sumatran orangutan)).